The sequence spans 106 residues: Nucleoid-associated protein Smlt1015 (106 aa).

A disordered region spans residues 81-106; that stretch reads IDAESKSKMGSATAGMQLPPGMKLPF.

This sequence belongs to the YbaB/EbfC family. As to quaternary structure, homodimer.

It is found in the cytoplasm. The protein localises to the nucleoid. Functionally, binds to DNA and alters its conformation. May be involved in regulation of gene expression, nucleoid organization and DNA protection. The protein is Nucleoid-associated protein Smlt1015 of Stenotrophomonas maltophilia (strain K279a).